The primary structure comprises 1312 residues: Kinesin-like protein KIF16B (1312 aa).

Positions 3 to 358 constitute a Kinesin motor domain; that stretch reads SVKVAVRVRP…LRYANRAKNI (356 aa). 102 to 109 lines the ATP pocket; it reads GQTGSGKS. Residues 366–425 adopt a coiled-coil conformation; that stretch reads EDANVKLIRELRAEIARLKTLLAQGNQIALLDSPTALSMEEKLHQNEARVQELTKEWTNK. S398 carries the post-translational modification Phosphoserine. Residues 480–544 form the FHA domain; sequence VGREDASTEQ…LNQGAVILLG (65 aa). T577 bears the Phosphothreonine mark. Phosphoserine is present on residues S582, S838, S1047, and S1145. 2 coiled-coil regions span residues 835 to 913 and 941 to 1073; these read KLAS…LQNH and QVEK…KQKI. The region spanning 1177–1291 is the PX domain; the sequence is DPIKISIPRY…KVGLTLSKHT (115 aa).

This sequence belongs to the TRAFAC class myosin-kinesin ATPase superfamily. Kinesin family. As to quaternary structure, interacts with PTPN21. Interacts with RAB14.

Its subcellular location is the cytoplasm. It localises to the cytoskeleton. The protein resides in the early endosome membrane. It is found in the spindle. Its function is as follows. Plus end-directed microtubule-dependent motor protein involved in endosome transport and receptor recycling and degradation. Regulates the plus end motility of early endosomes and the balance between recycling and degradation of receptors such as EGF receptor (EGFR) and FGF receptor (FGFR). Regulates the Golgi to endosome transport of FGFR-containing vesicles during early development, a key process for developing basement membrane and epiblast and primitive endoderm lineages during early postimplantation development. The polypeptide is Kinesin-like protein KIF16B (Kif16b) (Mus musculus (Mouse)).